A 344-amino-acid chain; its full sequence is Arginine N-succinyltransferase (344 aa).

Leucine 125 provides a ligand contact to succinyl-CoA. Histidine 229 (proton donor) is an active-site residue.

Belongs to the arginine N-succinyltransferase family.

The catalysed reaction is succinyl-CoA + L-arginine = N(2)-succinyl-L-arginine + CoA + H(+). The protein operates within amino-acid degradation; L-arginine degradation via AST pathway; L-glutamate and succinate from L-arginine: step 1/5. Its function is as follows. Catalyzes the transfer of succinyl-CoA to arginine to produce N(2)-succinylarginine. In Escherichia coli (strain UTI89 / UPEC), this protein is Arginine N-succinyltransferase.